Reading from the N-terminus, the 567-residue chain is Proline--tRNA ligase (567 aa).

Belongs to the class-II aminoacyl-tRNA synthetase family. ProS type 1 subfamily. As to quaternary structure, homodimer.

The protein localises to the cytoplasm. The enzyme catalyses tRNA(Pro) + L-proline + ATP = L-prolyl-tRNA(Pro) + AMP + diphosphate. Catalyzes the attachment of proline to tRNA(Pro) in a two-step reaction: proline is first activated by ATP to form Pro-AMP and then transferred to the acceptor end of tRNA(Pro). As ProRS can inadvertently accommodate and process non-cognate amino acids such as alanine and cysteine, to avoid such errors it has two additional distinct editing activities against alanine. One activity is designated as 'pretransfer' editing and involves the tRNA(Pro)-independent hydrolysis of activated Ala-AMP. The other activity is designated 'posttransfer' editing and involves deacylation of mischarged Ala-tRNA(Pro). The misacylated Cys-tRNA(Pro) is not edited by ProRS. The polypeptide is Proline--tRNA ligase (Staphylococcus aureus (strain MRSA252)).